A 323-amino-acid polypeptide reads, in one-letter code: Replication factor C subunit 4 (323 aa).

Residues valine 12, valine 24, 49–57, asparagine 145, and arginine 203 each bind ATP; that span reads GMPGIGKTT.

The protein belongs to the activator 1 small subunits family. In terms of assembly, replication factor C (RFC) is a heteropentamer of subunits RFC1, RFC2, RFC3, RFC4 and RFC5 and forms a complex with POL30/PCNA in the presence of ATP. Component of the RAD24-RFC complex which consists of RAD14, RFC2, RFC3, RFC4 and RFC5 and associates with the checkpoint clamp DDC1:MEC3:RAD17 complex. Component of the ELG1-RFC complex which consists of ELG1, RFC2, RFC3, RFC4 and RFC5. Component of the CTF18-RFC complex, which consists of CTF18, CTF8, DCC1, RFC2, RFC3, RFC4 and RFC5. RFC4 interacts with ECO1.

The protein localises to the nucleus. Functionally, component of ATP-dependent clamp loader (RFC and RFC-like) complexes for DNA clamps, such as the POL30/PCNA homotrimer and the checkpoint clamp DDC1:MEC3:RAD17 complex. During a clamp loading circle, the RFC:clamp complex binds to DNA and the recognition of the double-stranded/single-stranded junction stimulates ATP hydrolysis by RFC. The complex presumably provides bipartite ATP sites in which one subunit supplies a catalytic site for hydrolysis of ATP bound to the neighboring subunit. Dissociation of RFC from the clamp leaves the clamp encircling DNA. Component of the replication factor C (RFC or activator 1) complex which loads POL30/PCNA and acts during elongation of primed DNA templates by DNA polymerase delta and epsilon. RFC has an essential but redundant activity in sister chromatid cohesion establishment. Component of the RFC-like complex CTF18-RFC which is required for efficient establishment of chromosome cohesion during S-phase and may load or unload POL30/PCNA. Component of the RFC-like RAD24-RFC complex which loads the checkpoint clamp DDC1:MEC3:RAD17 complex and is involved in DNA repair pathways. Component of the RFC-like ELG1-RFC complex which appears to have a role in DNA replication, replication fork re-start, recombination and repair. The chain is Replication factor C subunit 4 (RFC4) from Saccharomyces cerevisiae (strain ATCC 204508 / S288c) (Baker's yeast).